A 476-amino-acid polypeptide reads, in one-letter code: Protein transport protein Sec61 subunit alpha isoform 1 (476 aa).

The Cytoplasmic portion of the chain corresponds to 1–33 (MAIKFLEVIKPFCVILPEIQKPERKIQFKEKVL). A helical transmembrane segment spans residues 34–53 (WTAITLFIFLVCCQIPLFGI). Residues 54–76 (MSSDSADPFYWMRVILASNRGTL) lie on the Lumenal side of the membrane. A helical membrane pass occupies residues 77 to 96 (MELGISPIVTSGLIMQLLAG). Over 97 to 117 (AKIIEVGDTPKDRALFNGAQK) the chain is Cytoplasmic. A helical membrane pass occupies residues 118–138 (LFGMIITIGQSIVYVMTGMYG). The Lumenal portion of the chain corresponds to 139-144 (DPSEMG). A helical membrane pass occupies residues 145-165 (AGICLLITIQLFVAGLIVLLL). The Cytoplasmic segment spans residues 166 to 172 (DELLQKG). The chain crosses the membrane as a helical span at residues 173–193 (YGLGSGISLFIATNICETIVW). Over 194-240 (KAFSPTTVNTGRGMEFEGAIIALFHLLATRTDKVRALREAFYRQNLP) the chain is Lumenal. Residues 241 to 261 (NLMNLIATIFVFAVVIYFQGF) traverse the membrane as a helical segment. The Cytoplasmic portion of the chain corresponds to 262–288 (RVDLPIKSARYRGQYNTYPIKLFYTSN). Residues 289-309 (IPIILQSALVSNLYVISQMLS) traverse the membrane as a helical segment. The Lumenal portion of the chain corresponds to 310–354 (ARFSGNLLVSLLGTWSDTSSGGPARAYPVGGLCYYLSPPESFGSV). Residues 355-375 (LEDPVHAVVYIVFMLGSCAFF) traverse the membrane as a helical segment. Residues 376–420 (SKTWIEVSGSSAKDVAKQLKEQQMVMRGHRETSMVHELNRYIPTA) are Cytoplasmic-facing. The chain crosses the membrane as a helical span at residues 421–441 (AAFGGLCIGALSVLADFLGAI). The Lumenal portion of the chain corresponds to 442–445 (GSGT). Residues 446-462 (GILLAVTIIYQYFEIFV) traverse the membrane as a helical segment. Over 463–476 (KEQSEVGSMGALLF) the chain is Cytoplasmic.

Belongs to the SecY/SEC61-alpha family. As to quaternary structure, the SEC61 channel-forming translocon complex consists of channel-forming core components SEC61A1, SEC61B and SEC61G and different auxiliary components such as SEC62 and SEC63. The SEC61 channel associates with the multi-pass translocon (MPT) complex. In terms of tissue distribution, expressed in proximal and distal tubules in kidney (at protein level).

It localises to the endoplasmic reticulum membrane. Component of SEC61 channel-forming translocon complex that mediates transport of signal peptide-containing precursor polypeptides across the endoplasmic reticulum (ER). Forms a ribosome receptor and a gated pore in the ER membrane, both functions required for cotranslational translocation of nascent polypeptides. May cooperate with auxiliary protein SEC62, SEC63 and HSPA5/BiP to enable post-translational transport of small presecretory proteins. The SEC61 channel is also involved in ER membrane insertion of transmembrane proteins: it mediates membrane insertion of the first few transmembrane segments of proteins, while insertion of subsequent transmembrane regions of multi-pass membrane proteins is mediated by the multi-pass translocon (MPT) complex. The SEC61 channel cooperates with the translocating protein TRAM1 to import nascent proteins into the ER. Controls the passive efflux of calcium ions from the ER lumen to the cytosol through SEC61 channel, contributing to the maintenance of cellular calcium homeostasis. Plays a critical role in nephrogenesis, specifically at pronephros stage. The sequence is that of Protein transport protein Sec61 subunit alpha isoform 1 (SEC61A1) from Homo sapiens (Human).